The chain runs to 316 residues: Delta(1)-pyrroline-2-carboxylate reductase (316 aa).

This sequence belongs to the ornithine cyclodeaminase/mu-crystallin family. As to quaternary structure, homodimer.

The enzyme catalyses L-proline + NAD(+) = 1-pyrroline-2-carboxylate + NADH + H(+). It catalyses the reaction L-proline + NADP(+) = 1-pyrroline-2-carboxylate + NADPH + H(+). In terms of biological role, catalyzes the reduction of Delta(1)-pyrroline-2-carboxylate (Pyr2C) to L-proline, using preferentially NADPH over NADH as the electron donor. Together with LhpH, is involved in a metabolic pathway that converts trans-3-hydroxy-L-proline (t3LHyp) to L-proline. To a much lesser extent, can also reduce Delta(1)-piperideine-2-carboxylate (Pip2C) to L-pipecolate in vitro; however, this activity has likely no physiological significance in vivo since C.psychrerythraea probably possesses no ability to metabolize D-lysine via the L-pipecolate pathway. Does not show ornithine cyclodeaminase (OCD) activity. In Colwellia psychrerythraea (strain 34H / ATCC BAA-681) (Vibrio psychroerythus), this protein is Delta(1)-pyrroline-2-carboxylate reductase.